Reading from the N-terminus, the 811-residue chain is Actin filament-associated protein 1-like 2 (811 aa).

Disordered regions lie at residues 67-110 (KEAQ…PPPK) and 132-168 (EPYNASFNDDGEAVSSSYESYDEDESNKSKSAMQQHQ). A PH 1 domain is found at 181–277 (DAMICAFLWR…WLKVIQDISG (97 aa)). Residues 294–326 (QRQIHPKAEGTDRHSGASESGSSTDGHPETPEI) are disordered. Basic and acidic residues predominate over residues 299–309 (PKAEGTDRHSG). The PH 2 domain maps to 359–453 (ALETSNYLNV…WLGLLLLESG (95 aa)). Disordered regions lie at residues 500–532 (RGQRYQQDDLYDDVDMSDIQGDEPKSEEKGEAE) and 558–631 (LGSP…KERV). Composition is skewed to basic and acidic residues over residues 521–532 (DEPKSEEKGEAE), 566–577 (VSGKKDNEESER), and 622–631 (RLEKSNKERV). Residues 642 to 737 (LLGKNRTEAE…KENLRKAELG (96 aa)) adopt a coiled-coil conformation.

In terms of assembly, interacts with src.

It is found in the cytoplasm. In terms of biological role, may play a role in a signaling cascade by enhancing the kinase activity of src. Contributes to src-regulated transcription activation. The protein is Actin filament-associated protein 1-like 2 (afap1l2) of Xenopus laevis (African clawed frog).